Consider the following 234-residue polypeptide: Nodulation protein NolW (234 aa).

The chain crosses the membrane as a helical span at residues 17 to 36 (LLCVGLFLFAGIHTTLGATL).

Its subcellular location is the membrane. Functionally, regulates cultivar-specific nodulation of soybean. This chain is Nodulation protein NolW (nolW), found in Rhizobium fredii (Sinorhizobium fredii).